Consider the following 451-residue polypeptide: Subtilase-type proteinase psp3 (451 aa).

An N-terminal signal peptide occupies residues 1–20 (MRVSWISGLLLVAHLAPSSA). In terms of domain architecture, Inhibitor I9 spans 80–161 (YIVMFKPSVD…LVEPDRVMHV (82 aa)). The region spanning 169–451 (PWGLARVSHR…PNVLAFNNYE (283 aa)) is the Peptidase S8 domain. Catalysis depends on charge relay system residues D205, H237, and S394.

Belongs to the peptidase S8 family.

This chain is Subtilase-type proteinase psp3 (psp3), found in Schizosaccharomyces pombe (strain 972 / ATCC 24843) (Fission yeast).